The chain runs to 614 residues: Dihydroxy-acid dehydratase (614 aa).

Mg(2+) is bound at residue D81. [2Fe-2S] cluster is bound at residue C122. Mg(2+)-binding residues include D123 and K124. K124 carries the N6-carboxylysine modification. C195 lines the [2Fe-2S] cluster pocket. Residue E491 participates in Mg(2+) binding. The Proton acceptor role is filled by S517.

The protein belongs to the IlvD/Edd family. Homodimer. [2Fe-2S] cluster is required as a cofactor. Mg(2+) serves as cofactor.

The enzyme catalyses (2R)-2,3-dihydroxy-3-methylbutanoate = 3-methyl-2-oxobutanoate + H2O. The catalysed reaction is (2R,3R)-2,3-dihydroxy-3-methylpentanoate = (S)-3-methyl-2-oxopentanoate + H2O. The protein operates within amino-acid biosynthesis; L-isoleucine biosynthesis; L-isoleucine from 2-oxobutanoate: step 3/4. It participates in amino-acid biosynthesis; L-valine biosynthesis; L-valine from pyruvate: step 3/4. In terms of biological role, functions in the biosynthesis of branched-chain amino acids. Catalyzes the dehydration of (2R,3R)-2,3-dihydroxy-3-methylpentanoate (2,3-dihydroxy-3-methylvalerate) into 2-oxo-3-methylpentanoate (2-oxo-3-methylvalerate) and of (2R)-2,3-dihydroxy-3-methylbutanoate (2,3-dihydroxyisovalerate) into 2-oxo-3-methylbutanoate (2-oxoisovalerate), the penultimate precursor to L-isoleucine and L-valine, respectively. The chain is Dihydroxy-acid dehydratase from Nitrobacter winogradskyi (strain ATCC 25391 / DSM 10237 / CIP 104748 / NCIMB 11846 / Nb-255).